A 407-amino-acid polypeptide reads, in one-letter code: Obg-like ATPase homolog (407 aa).

One can recognise an OBG-type G domain in the interval 46 to 301 (LKIGIVGMPN…LTPEEAAQEC (256 aa)). ATP-binding positions include 55–60 (NIGKST) and Met249. The region spanning 322 to 405 (NLIHYFTASE…EPGDIIFWKI (84 aa)) is the TGS domain.

The protein belongs to the TRAFAC class OBG-HflX-like GTPase superfamily. OBG GTPase family.

Its function is as follows. Hydrolyzes ATP, and can also hydrolyze GTP with lower efficiency. Has lower affinity for GTP. The chain is Obg-like ATPase homolog from Schizosaccharomyces pombe (strain 972 / ATCC 24843) (Fission yeast).